Reading from the N-terminus, the 340-residue chain is Lipoyl synthase (340 aa).

Residues C83, C88, C94, C109, C113, C116, and S323 each contribute to the [4Fe-4S] cluster site. The 218-residue stretch at 95–312 (FSGGTATFMI…AEEGYKMGFK (218 aa)) folds into the Radical SAM core domain.

This sequence belongs to the radical SAM superfamily. Lipoyl synthase family. [4Fe-4S] cluster is required as a cofactor.

The protein localises to the cytoplasm. It carries out the reaction [[Fe-S] cluster scaffold protein carrying a second [4Fe-4S](2+) cluster] + N(6)-octanoyl-L-lysyl-[protein] + 2 oxidized [2Fe-2S]-[ferredoxin] + 2 S-adenosyl-L-methionine + 4 H(+) = [[Fe-S] cluster scaffold protein] + N(6)-[(R)-dihydrolipoyl]-L-lysyl-[protein] + 4 Fe(3+) + 2 hydrogen sulfide + 2 5'-deoxyadenosine + 2 L-methionine + 2 reduced [2Fe-2S]-[ferredoxin]. It functions in the pathway protein modification; protein lipoylation via endogenous pathway; protein N(6)-(lipoyl)lysine from octanoyl-[acyl-carrier-protein]: step 2/2. Its function is as follows. Catalyzes the radical-mediated insertion of two sulfur atoms into the C-6 and C-8 positions of the octanoyl moiety bound to the lipoyl domains of lipoate-dependent enzymes, thereby converting the octanoylated domains into lipoylated derivatives. The polypeptide is Lipoyl synthase (Pseudomonas fluorescens (strain Pf0-1)).